Consider the following 182-residue polypeptide: Shikimate kinase (182 aa).

14-19 (GAGKTT) is a binding site for ATP. Thr18 lines the Mg(2+) pocket. Residues Asp36, Arg60, and Gly84 each contribute to the substrate site. Arg122 contributes to the ATP binding site. Arg141 is a binding site for substrate.

Belongs to the shikimate kinase family. In terms of assembly, monomer. It depends on Mg(2+) as a cofactor.

Its subcellular location is the cytoplasm. The catalysed reaction is shikimate + ATP = 3-phosphoshikimate + ADP + H(+). The protein operates within metabolic intermediate biosynthesis; chorismate biosynthesis; chorismate from D-erythrose 4-phosphate and phosphoenolpyruvate: step 5/7. Catalyzes the specific phosphorylation of the 3-hydroxyl group of shikimic acid using ATP as a cosubstrate. This Marinomonas sp. (strain MWYL1) protein is Shikimate kinase.